A 456-amino-acid polypeptide reads, in one-letter code: uncharacterized protein (456 aa).

One can recognise a TRAM domain in the interval 3–61 (TIKKNEVKTGKVIDLTHEGHGVVKVDRYPIFIPNALIDEEIKFKLIKVKKNFAIGKLIE). Residues Cys-74, Cys-80, Cys-83, and Cys-162 each coordinate [4Fe-4S] cluster. S-adenosyl-L-methionine-binding residues include Gln-286, Tyr-315, Glu-336, and Asp-384. Cys-411 acts as the Nucleophile in catalysis.

The protein belongs to the class I-like SAM-binding methyltransferase superfamily. RNA M5U methyltransferase family.

This is an uncharacterized protein from Staphylococcus epidermidis (strain ATCC 35984 / DSM 28319 / BCRC 17069 / CCUG 31568 / BM 3577 / RP62A).